A 466-amino-acid polypeptide reads, in one-letter code: Bifunctional protein GlmU (466 aa).

Residues 1–233 are pyrophosphorylase; that stretch reads MLHKSVLGLV…ADEAMGANDR (233 aa). Residues 11 to 14, Lys-25, Gln-79, and 84 to 85 each bind UDP-N-acetyl-alpha-D-glucosamine; these read LAAG and GT. Asp-108 lines the Mg(2+) pocket. Residues Gly-143, Glu-158, Asn-173, and Asn-231 each coordinate UDP-N-acetyl-alpha-D-glucosamine. Asn-231 contacts Mg(2+). A linker region spans residues 234–254; that stretch reads AQLAALEAVYRQRKVQELFAQ. The tract at residues 255–466 is N-acetyltransferase; the sequence is GVTLIDPNRI…QKKKEHKNDA (212 aa). Residues Arg-337 and Lys-355 each coordinate UDP-N-acetyl-alpha-D-glucosamine. His-367 acts as the Proton acceptor in catalysis. 2 residues coordinate UDP-N-acetyl-alpha-D-glucosamine: Tyr-370 and Asn-381. Residues Ala-384, 390–391, Ser-409, Ala-427, and Arg-444 each bind acetyl-CoA; that span reads NY.

In the N-terminal section; belongs to the N-acetylglucosamine-1-phosphate uridyltransferase family. It in the C-terminal section; belongs to the transferase hexapeptide repeat family. In terms of assembly, homotrimer. Mg(2+) is required as a cofactor.

The protein resides in the cytoplasm. It catalyses the reaction alpha-D-glucosamine 1-phosphate + acetyl-CoA = N-acetyl-alpha-D-glucosamine 1-phosphate + CoA + H(+). The catalysed reaction is N-acetyl-alpha-D-glucosamine 1-phosphate + UTP + H(+) = UDP-N-acetyl-alpha-D-glucosamine + diphosphate. It participates in nucleotide-sugar biosynthesis; UDP-N-acetyl-alpha-D-glucosamine biosynthesis; N-acetyl-alpha-D-glucosamine 1-phosphate from alpha-D-glucosamine 6-phosphate (route II): step 2/2. It functions in the pathway nucleotide-sugar biosynthesis; UDP-N-acetyl-alpha-D-glucosamine biosynthesis; UDP-N-acetyl-alpha-D-glucosamine from N-acetyl-alpha-D-glucosamine 1-phosphate: step 1/1. Its pathway is bacterial outer membrane biogenesis; LPS lipid A biosynthesis. Functionally, catalyzes the last two sequential reactions in the de novo biosynthetic pathway for UDP-N-acetylglucosamine (UDP-GlcNAc). The C-terminal domain catalyzes the transfer of acetyl group from acetyl coenzyme A to glucosamine-1-phosphate (GlcN-1-P) to produce N-acetylglucosamine-1-phosphate (GlcNAc-1-P), which is converted into UDP-GlcNAc by the transfer of uridine 5-monophosphate (from uridine 5-triphosphate), a reaction catalyzed by the N-terminal domain. The sequence is that of Bifunctional protein GlmU from Dichelobacter nodosus (strain VCS1703A).